A 436-amino-acid polypeptide reads, in one-letter code: GTPase Der (436 aa).

2 EngA-type G domains span residues 4 to 167 and 176 to 351; these read PVIA…PKIE and IRFS…ESHS. GTP is bound by residues 10–17, 57–61, 119–122, 182–189, 229–233, and 294–297; these read GRPNVGKS, DTGGI, NKVD, DTAGM, and NKWD. A KH-like domain is found at 352-436; the sequence is IRVQTNVLND…PIHIIARARD (85 aa).

This sequence belongs to the TRAFAC class TrmE-Era-EngA-EngB-Septin-like GTPase superfamily. EngA (Der) GTPase family. In terms of assembly, associates with the 50S ribosomal subunit.

GTPase that plays an essential role in the late steps of ribosome biogenesis. This is GTPase Der from Bacillus cereus (strain G9842).